Here is a 3603-residue protein sequence, read N- to C-terminus: Plipastatin synthase subunit D (3603 aa).

The segment at 7 to 306 (IQDIYPLSYM…NTMPVRVQGA (300 aa)) is condensation 1. The tract at residues 7–1043 (IQDIYPLSYM…ALIIREAEQN (1037 aa)) is domain 1 (proline-activating). Positions 490-889 (TYRELNKAAN…NHPDISEAAI (400 aa)) are adenylation 1. Residues 966–1041 (APRNLLEAKL…GLALIIREAE (76 aa)) enclose the Carrier 1 domain. At Ser-1001 the chain carries O-(pantetheine 4'-phosphoryl)serine. A condensation 2 region spans residues 1053 to 1334 (KRDTYPVSSA…NTLALRTRPA (282 aa)). The tract at residues 1053 to 2069 (KRDTYPVSSA…TVEGLATVIR (1017 aa)) is domain 2 (glutamine-activating). Residues 1521-1924 (TYKELNEQAN…SIEGVREAAV (404 aa)) are adenylation 2. The Carrier 2 domain maps to 1997-2072 (APRNVTEMKL…GLATVIREGT (76 aa)). Ser-2032 bears the O-(pantetheine 4'-phosphoryl)serine mark. The segment at 2084 to 2374 (KQETYPVSSA…NTLALRTRPE (291 aa)) is condensation 3. The interval 2084 to 3596 (KQETYPVSSA…ELTEDALQEI (1513 aa)) is domain 3 (proline-activating). The interval 2560–2956 (TYQELDEWSN…CIKGVKDAAV (397 aa)) is adenylation 3. A Carrier 3 domain is found at 3034 to 3108 (PPSSKMEQIL…ELAAYIRDSD (75 aa)). Position 3069 is an O-(pantetheine 4'-phosphoryl)serine (Ser-3069). Residues 3116–3596 (VEGDVQWSPV…ELTEDALQEI (481 aa)) are epimerization.

Belongs to the ATP-dependent AMP-binding enzyme family. The cofactor is pantetheine 4'-phosphate.

In terms of biological role, this protein is a multifunctional enzyme, able to activate and polymerize the amino acids Pro, Gln and Tyr as part of the biosynthesis of the lipopeptide antibiotic plipastatin. The Tyr residue is further epimerized to the D-isomer form. The activation sites for these amino acids consist of individual domains. This chain is Plipastatin synthase subunit D (ppsD), found in Bacillus subtilis (strain 168).